Consider the following 398-residue polypeptide: Probable RNA methyltransferase sce1580 (398 aa).

Residues 1 to 24 (MRVPEIPEETASPLRAGDPPAQVA) are disordered. Glu140 serves as the catalytic Proton acceptor. The region spanning 146 to 378 (GPARTTLCVS…TLVRRPRGRD (233 aa)) is the Radical SAM core domain. Cys153 and Cys383 are oxidised to a cystine. Residues Cys160, Cys164, and Cys167 each contribute to the [4Fe-4S] cluster site. Residues 211–212 (GE), Ser243, 265–267 (SLN), and Asn340 contribute to the S-adenosyl-L-methionine site. Cys383 (S-methylcysteine intermediate) is an active-site residue.

This sequence belongs to the radical SAM superfamily. RlmN family. Requires [4Fe-4S] cluster as cofactor.

The protein resides in the cytoplasm. This chain is Probable RNA methyltransferase sce1580, found in Sorangium cellulosum (strain So ce56) (Polyangium cellulosum (strain So ce56)).